The chain runs to 232 residues: 2,3-bisphosphoglycerate-dependent phosphoglycerate mutase (232 aa).

Substrate is bound by residues 8–15, 21–22, Arg60, 87–90, Lys98, 114–115, and 183–184; these read RHGESLWN, TG, ERHY, RR, and GN. His9 serves as the catalytic Tele-phosphohistidine intermediate. Glu87 serves as the catalytic Proton donor/acceptor.

Belongs to the phosphoglycerate mutase family. BPG-dependent PGAM subfamily.

It catalyses the reaction (2R)-2-phosphoglycerate = (2R)-3-phosphoglycerate. Its pathway is carbohydrate degradation; glycolysis; pyruvate from D-glyceraldehyde 3-phosphate: step 3/5. Functionally, catalyzes the interconversion of 2-phosphoglycerate and 3-phosphoglycerate. The sequence is that of 2,3-bisphosphoglycerate-dependent phosphoglycerate mutase from Clostridium beijerinckii (strain ATCC 51743 / NCIMB 8052) (Clostridium acetobutylicum).